The primary structure comprises 721 residues: 1,4-alpha-glucan branching enzyme GlgB (721 aa).

D404 functions as the Nucleophile in the catalytic mechanism. E457 serves as the catalytic Proton donor.

Belongs to the glycosyl hydrolase 13 family. GlgB subfamily. As to quaternary structure, monomer.

The catalysed reaction is Transfers a segment of a (1-&gt;4)-alpha-D-glucan chain to a primary hydroxy group in a similar glucan chain.. Its pathway is glycan biosynthesis; glycogen biosynthesis. Its function is as follows. Catalyzes the formation of the alpha-1,6-glucosidic linkages in glycogen by scission of a 1,4-alpha-linked oligosaccharide from growing alpha-1,4-glucan chains and the subsequent attachment of the oligosaccharide to the alpha-1,6 position. The protein is 1,4-alpha-glucan branching enzyme GlgB of Novosphingobium aromaticivorans (strain ATCC 700278 / DSM 12444 / CCUG 56034 / CIP 105152 / NBRC 16084 / F199).